Here is a 256-residue protein sequence, read N- to C-terminus: Geranylgeranylglyceryl phosphate synthase (256 aa).

Mg(2+) is bound by residues D28 and S53. Sn-glycerol 1-phosphate contacts are provided by residues 172–178, 203–204, and 225–226; these read YLEAGSG, GG, and GT.

This sequence belongs to the GGGP/HepGP synthase family. Group II subfamily. Mg(2+) serves as cofactor.

It is found in the cytoplasm. The enzyme catalyses sn-glycerol 1-phosphate + (2E,6E,10E)-geranylgeranyl diphosphate = sn-3-O-(geranylgeranyl)glycerol 1-phosphate + diphosphate. It participates in membrane lipid metabolism; glycerophospholipid metabolism. Functionally, prenyltransferase that catalyzes the transfer of the geranylgeranyl moiety of geranylgeranyl diphosphate (GGPP) to the C3 hydroxyl of sn-glycerol-1-phosphate (G1P). This reaction is the first ether-bond-formation step in the biosynthesis of archaeal membrane lipids. In Methanococcus maripaludis (strain C6 / ATCC BAA-1332), this protein is Geranylgeranylglyceryl phosphate synthase.